A 404-amino-acid polypeptide reads, in one-letter code: Cysteine desulfurase IscS (404 aa).

Pyridoxal 5'-phosphate-binding positions include 75–76 (AT), asparagine 155, glutamine 183, and 203–205 (SAH). Residue lysine 206 is modified to N6-(pyridoxal phosphate)lysine. Threonine 243 contacts pyridoxal 5'-phosphate. Cysteine 328 functions as the Cysteine persulfide intermediate in the catalytic mechanism. [2Fe-2S] cluster is bound at residue cysteine 328.

Belongs to the class-V pyridoxal-phosphate-dependent aminotransferase family. NifS/IscS subfamily. As to quaternary structure, homodimer. Forms a heterotetramer with IscU, interacts with other sulfur acceptors. Pyridoxal 5'-phosphate serves as cofactor.

The protein localises to the cytoplasm. The catalysed reaction is (sulfur carrier)-H + L-cysteine = (sulfur carrier)-SH + L-alanine. It participates in cofactor biosynthesis; iron-sulfur cluster biosynthesis. In terms of biological role, master enzyme that delivers sulfur to a number of partners involved in Fe-S cluster assembly, tRNA modification or cofactor biosynthesis. Catalyzes the removal of elemental sulfur atoms from cysteine to produce alanine. Functions as a sulfur delivery protein for Fe-S cluster synthesis onto IscU, an Fe-S scaffold assembly protein, as well as other S acceptor proteins. This is Cysteine desulfurase IscS from Neisseria meningitidis serogroup C (strain 053442).